The chain runs to 493 residues: Cobyric acid synthase (493 aa).

A GATase cobBQ-type domain is found at 246–440 (PIDIAVIKMP…IHGVFDGVSF (195 aa)). Residue Cys-326 is the Nucleophile of the active site. His-432 is an active-site residue.

Belongs to the CobB/CobQ family. CobQ subfamily.

It functions in the pathway cofactor biosynthesis; adenosylcobalamin biosynthesis. Functionally, catalyzes amidations at positions B, D, E, and G on adenosylcobyrinic A,C-diamide. NH(2) groups are provided by glutamine, and one molecule of ATP is hydrogenolyzed for each amidation. The sequence is that of Cobyric acid synthase from Clostridium botulinum (strain Langeland / NCTC 10281 / Type F).